A 261-amino-acid polypeptide reads, in one-letter code: Putative quercetin 2,3-dioxygenase Ta0133 (261 aa).

4 residues coordinate a divalent metal cation: histidine 17, histidine 19, histidine 61, and glutamate 63.

Belongs to the pirin family. It depends on a divalent metal cation as a cofactor.

It catalyses the reaction quercetin + O2 = 2-(3,4-dihydroxybenzoyloxy)-4,6-dihydroxybenzoate + CO. The protein operates within flavonoid metabolism; quercetin degradation. In terms of biological role, putative quercetin 2,3-dioxygenase. This Thermoplasma acidophilum (strain ATCC 25905 / DSM 1728 / JCM 9062 / NBRC 15155 / AMRC-C165) protein is Putative quercetin 2,3-dioxygenase Ta0133.